The sequence spans 358 residues: GTPase Obg (358 aa).

An Obg domain is found at 1–159 (MKFLDEAKVY…RWIWLRLKLI (159 aa)). The region spanning 160–327 (ADAGLVGLPN…VLRALVEVIG (168 aa)) is the OBG-type G domain. GTP contacts are provided by residues 166–173 (GLPNAGKS), 191–195 (FTTLH), 212–215 (DIPG), 279–282 (NKID), and 308–310 (SGV). 2 residues coordinate Mg(2+): Ser-173 and Thr-193. The disordered stretch occupies residues 335–358 (AKGADASAAQAMETPVARAKPWSP).

It belongs to the TRAFAC class OBG-HflX-like GTPase superfamily. OBG GTPase family. In terms of assembly, monomer. Mg(2+) is required as a cofactor.

It is found in the cytoplasm. Functionally, an essential GTPase which binds GTP, GDP and possibly (p)ppGpp with moderate affinity, with high nucleotide exchange rates and a fairly low GTP hydrolysis rate. Plays a role in control of the cell cycle, stress response, ribosome biogenesis and in those bacteria that undergo differentiation, in morphogenesis control. This is GTPase Obg from Nitrobacter winogradskyi (strain ATCC 25391 / DSM 10237 / CIP 104748 / NCIMB 11846 / Nb-255).